The primary structure comprises 144 residues: Large ribosomal subunit protein uL16 (144 aa).

Belongs to the universal ribosomal protein uL16 family. In terms of assembly, part of the 50S ribosomal subunit.

In terms of biological role, binds 23S rRNA and is also seen to make contacts with the A and possibly P site tRNAs. The polypeptide is Large ribosomal subunit protein uL16 (Bacillus licheniformis (strain ATCC 14580 / DSM 13 / JCM 2505 / CCUG 7422 / NBRC 12200 / NCIMB 9375 / NCTC 10341 / NRRL NRS-1264 / Gibson 46)).